A 46-amino-acid polypeptide reads, in one-letter code: Viscotoxin-C1 (46 aa).

Disulfide bonds link Cys3-Cys40, Cys4-Cys32, and Cys16-Cys26.

In terms of assembly, monomer.

The protein localises to the secreted. Functionally, thionins are small plant proteins which are toxic to animal cells. They seem to exert their toxic effect at the level of the cell membrane. Their precise function is not known. The sequence is that of Viscotoxin-C1 from Viscum album (European mistletoe).